The chain runs to 194 residues: MLSSTLRVAVVCVSNVNRSMEAHSILRRKGLSVRSFGTESHVRLPGPRPNRPVVYDFATTYKEMYNDLLRKDRERYTRNGILHILGRNERIKPGPERFQECTDFFDVIFTCEESVYDTVVEDLCSREQQTFQPVHVINMDIQDTLEDATLGAFLICEICQCLQQSDDMEDNLEELLLQMEEKAGKSFLHTVCFY.

This sequence belongs to the SSU72 phosphatase family.

The protein localises to the nucleus. It catalyses the reaction O-phospho-L-seryl-[protein] + H2O = L-seryl-[protein] + phosphate. The catalysed reaction is O-phospho-L-threonyl-[protein] + H2O = L-threonyl-[protein] + phosphate. Protein phosphatase that catalyzes the dephosphorylation of the C-terminal domain of RNA polymerase II. Plays a role in RNA processing and termination. This chain is RNA polymerase II subunit A C-terminal domain phosphatase SSU72 like protein 4, found in Homo sapiens (Human).